A 303-amino-acid polypeptide reads, in one-letter code: Hydroxyethylthiazole kinase (303 aa).

Polar residues predominate over residues 1 to 15; the sequence is MTTASTTPNSDTSNL. Residues 1–23 are disordered; it reads MTTASTTPNSDTSNLHEVAPDDP. Substrate is bound at residue Met67. Residues Arg142 and Ser206 each contribute to the ATP site. Gly233 contacts substrate.

It belongs to the Thz kinase family. Requires Mg(2+) as cofactor.

The catalysed reaction is 5-(2-hydroxyethyl)-4-methylthiazole + ATP = 4-methyl-5-(2-phosphooxyethyl)-thiazole + ADP + H(+). It functions in the pathway cofactor biosynthesis; thiamine diphosphate biosynthesis; 4-methyl-5-(2-phosphoethyl)-thiazole from 5-(2-hydroxyethyl)-4-methylthiazole: step 1/1. In terms of biological role, catalyzes the phosphorylation of the hydroxyl group of 4-methyl-5-beta-hydroxyethylthiazole (THZ). The protein is Hydroxyethylthiazole kinase of Bifidobacterium animalis subsp. lactis (strain AD011).